A 374-amino-acid polypeptide reads, in one-letter code: Chaperone protein DnaJ (374 aa).

The 66-residue stretch at 5–70 (DYYKLLGVDR…EKRAGYDRYG (66 aa)) folds into the J domain. The segment at 136-214 (GIQAPIHYVT…CNGSGRRRDE (79 aa)) adopts a CR-type zinc-finger fold. C149, C152, C166, C169, C188, C191, C202, and C205 together coordinate Zn(2+). CXXCXGXG motif repeat units follow at residues 149–156 (CDMCQGRG), 166–173 (CHTCQGSG), 188–195 (CTTCYGEG), and 202–209 (CKKCNGSG).

This sequence belongs to the DnaJ family. In terms of assembly, homodimer. Zn(2+) is required as a cofactor.

The protein resides in the cytoplasm. Its function is as follows. Participates actively in the response to hyperosmotic and heat shock by preventing the aggregation of stress-denatured proteins and by disaggregating proteins, also in an autonomous, DnaK-independent fashion. Unfolded proteins bind initially to DnaJ; upon interaction with the DnaJ-bound protein, DnaK hydrolyzes its bound ATP, resulting in the formation of a stable complex. GrpE releases ADP from DnaK; ATP binding to DnaK triggers the release of the substrate protein, thus completing the reaction cycle. Several rounds of ATP-dependent interactions between DnaJ, DnaK and GrpE are required for fully efficient folding. Also involved, together with DnaK and GrpE, in the DNA replication of plasmids through activation of initiation proteins. The chain is Chaperone protein DnaJ from Wolbachia sp. subsp. Brugia malayi (strain TRS).